We begin with the raw amino-acid sequence, 363 residues long: S-adenosylmethionine:tRNA ribosyltransferase-isomerase (363 aa).

Belongs to the QueA family. In terms of assembly, monomer.

The protein resides in the cytoplasm. It carries out the reaction 7-aminomethyl-7-carbaguanosine(34) in tRNA + S-adenosyl-L-methionine = epoxyqueuosine(34) in tRNA + adenine + L-methionine + 2 H(+). It functions in the pathway tRNA modification; tRNA-queuosine biosynthesis. Its function is as follows. Transfers and isomerizes the ribose moiety from AdoMet to the 7-aminomethyl group of 7-deazaguanine (preQ1-tRNA) to give epoxyqueuosine (oQ-tRNA). The sequence is that of S-adenosylmethionine:tRNA ribosyltransferase-isomerase from Haemophilus influenzae (strain PittGG).